The chain runs to 934 residues: Phosphoenolpyruvate carboxylase (934 aa).

Active-site residues include histidine 161 and lysine 593.

Belongs to the PEPCase type 1 family. Requires Mg(2+) as cofactor.

The catalysed reaction is oxaloacetate + phosphate = phosphoenolpyruvate + hydrogencarbonate. Its function is as follows. Forms oxaloacetate, a four-carbon dicarboxylic acid source for the tricarboxylic acid cycle. The chain is Phosphoenolpyruvate carboxylase (ppc) from Mycobacterium leprae (strain TN).